The primary structure comprises 187 residues: Elongation factor P (187 aa).

It belongs to the elongation factor P family.

It localises to the cytoplasm. It functions in the pathway protein biosynthesis; polypeptide chain elongation. Involved in peptide bond synthesis. Stimulates efficient translation and peptide-bond synthesis on native or reconstituted 70S ribosomes in vitro. Probably functions indirectly by altering the affinity of the ribosome for aminoacyl-tRNA, thus increasing their reactivity as acceptors for peptidyl transferase. The protein is Elongation factor P of Gloeobacter violaceus (strain ATCC 29082 / PCC 7421).